A 172-amino-acid polypeptide reads, in one-letter code: Shikimate kinase (172 aa).

11-16 (GAGKST) serves as a coordination point for ATP. A Mg(2+)-binding site is contributed by Ser15. Substrate is bound by residues Asp33, Arg57, and Gly79. Arg117 contributes to the ATP binding site. Substrate is bound at residue Arg136. Arg153 contacts ATP.

Belongs to the shikimate kinase family. In terms of assembly, monomer. Mg(2+) is required as a cofactor.

The protein resides in the cytoplasm. The enzyme catalyses shikimate + ATP = 3-phosphoshikimate + ADP + H(+). Its pathway is metabolic intermediate biosynthesis; chorismate biosynthesis; chorismate from D-erythrose 4-phosphate and phosphoenolpyruvate: step 5/7. Its function is as follows. Catalyzes the specific phosphorylation of the 3-hydroxyl group of shikimic acid using ATP as a cosubstrate. The polypeptide is Shikimate kinase (Pseudomonas syringae pv. tomato (strain ATCC BAA-871 / DC3000)).